Reading from the N-terminus, the 793-residue chain is Ferredoxin/F(420)H(2)-dependent CoB-CoM heterodisulfide reductase subunit A (793 aa).

147–170 (GGGVAGIEAALNLAEAGFPVTMVE) contacts FAD. 4 4Fe-4S ferredoxin-type domains span residues 233–264 (RKPR…PMNY), 282–311 (QVVL…YEQK), 571–600 (MGAH…IENK), and 601–629 (KAVV…MRNF). Residues Cys-243, Cys-246, Cys-250, Cys-254, Cys-291, Cys-294, Cys-297, Cys-301, Cys-580, Cys-583, Cys-586, Cys-590, Cys-609, Cys-612, Cys-615, and Cys-619 each contribute to the [4Fe-4S] cluster site.

Belongs to the HdrA family. The ferredoxin/F(420)H(2)-dependent CoB-CoM heterodisulfide reductase is composed of three subunits; HdrA2, HdrB2 and HdrC2. Requires [4Fe-4S] cluster as cofactor. It depends on [2Fe-2S] cluster as a cofactor. FAD is required as a cofactor.

The protein resides in the cytoplasm. The enzyme catalyses coenzyme B + coenzyme M + 2 oxidized [2Fe-2S]-[ferredoxin] = coenzyme M-coenzyme B heterodisulfide + 2 reduced [2Fe-2S]-[ferredoxin] + 2 H(+). It catalyses the reaction coenzyme B + 2 oxidized coenzyme F420-(gamma-L-Glu)(n) + coenzyme M + 2 reduced [2Fe-2S]-[ferredoxin] + 4 H(+) = coenzyme M-coenzyme B heterodisulfide + 2 reduced coenzyme F420-(gamma-L-Glu)(n) + 2 oxidized [2Fe-2S]-[ferredoxin]. Its pathway is cofactor metabolism; coenzyme M-coenzyme B heterodisulfide reduction; coenzyme B and coenzyme M from coenzyme M-coenzyme B heterodisulfide: step 1/1. Its function is as follows. Part of a complex that catalyzes the reversible reduction of CoM-S-S-CoB to the thiol-coenzymes H-S-CoM (coenzyme M) and H-S-CoB (coenzyme B). Catalyzes the transfer of electrons from ferredoxin to CoM-S-S-CoB during methanogenesis from acetate. Electrons transfer from ferredoxin to CoM-S-S-CoB via HdrA2, HdrC2 and HdrB2. In addition, the complex can use electron bifurcation to direct electron pairs from reduced coenzyme F420 towards the reduction of both ferredoxin and CoB-CoM heterodisulfide. This activity may take place during Fe(III)-dependent anaerobic methane oxidation. This chain is Ferredoxin/F(420)H(2)-dependent CoB-CoM heterodisulfide reductase subunit A, found in Methanosarcina acetivorans (strain ATCC 35395 / DSM 2834 / JCM 12185 / C2A).